The primary structure comprises 258 residues: 5'-nucleotidase SurE (258 aa).

A divalent metal cation is bound by residues Asp8, Asp9, Ser39, and Asn95.

This sequence belongs to the SurE nucleotidase family. Requires a divalent metal cation as cofactor.

The protein resides in the cytoplasm. It carries out the reaction a ribonucleoside 5'-phosphate + H2O = a ribonucleoside + phosphate. Nucleotidase that shows phosphatase activity on nucleoside 5'-monophosphates. In Methanobrevibacter smithii (strain ATCC 35061 / DSM 861 / OCM 144 / PS), this protein is 5'-nucleotidase SurE.